The following is a 286-amino-acid chain: 4-diphosphocytidyl-2-C-methyl-D-erythritol kinase (286 aa).

K11 is an active-site residue. 94 to 104 is a binding site for ATP; that stretch reads PMGGGIGGGSS. D136 is a catalytic residue.

Belongs to the GHMP kinase family. IspE subfamily.

The catalysed reaction is 4-CDP-2-C-methyl-D-erythritol + ATP = 4-CDP-2-C-methyl-D-erythritol 2-phosphate + ADP + H(+). Its pathway is isoprenoid biosynthesis; isopentenyl diphosphate biosynthesis via DXP pathway; isopentenyl diphosphate from 1-deoxy-D-xylulose 5-phosphate: step 3/6. In terms of biological role, catalyzes the phosphorylation of the position 2 hydroxy group of 4-diphosphocytidyl-2C-methyl-D-erythritol. This is 4-diphosphocytidyl-2-C-methyl-D-erythritol kinase from Pseudomonas entomophila (strain L48).